The primary structure comprises 199 residues: Probable nicotinate-nucleotide adenylyltransferase (199 aa).

Belongs to the NadD family.

It catalyses the reaction nicotinate beta-D-ribonucleotide + ATP + H(+) = deamido-NAD(+) + diphosphate. It functions in the pathway cofactor biosynthesis; NAD(+) biosynthesis; deamido-NAD(+) from nicotinate D-ribonucleotide: step 1/1. Its function is as follows. Catalyzes the reversible adenylation of nicotinate mononucleotide (NaMN) to nicotinic acid adenine dinucleotide (NaAD). In Roseiflexus sp. (strain RS-1), this protein is Probable nicotinate-nucleotide adenylyltransferase.